A 171-amino-acid polypeptide reads, in one-letter code: Small ribosomal subunit protein uS4 (171 aa).

The 65-residue stretch at 104–168 (RRLQTIVYKK…SPFKERAEEA (65 aa)) folds into the S4 RNA-binding domain.

This sequence belongs to the universal ribosomal protein uS4 family. In terms of assembly, part of the 30S ribosomal subunit. Contacts protein S5. The interaction surface between S4 and S5 is involved in control of translational fidelity.

Its function is as follows. One of the primary rRNA binding proteins, it binds directly to 16S rRNA where it nucleates assembly of the body of the 30S subunit. Functionally, with S5 and S12 plays an important role in translational accuracy. This is Small ribosomal subunit protein uS4 from Aeropyrum pernix (strain ATCC 700893 / DSM 11879 / JCM 9820 / NBRC 100138 / K1).